We begin with the raw amino-acid sequence, 264 residues long: Accessory gland-specific peptide 26Aa (264 aa).

A signal peptide spans 1–18 (MNQILLCSPILLLLFTVA). The sufficient for promoting ovulation when expressed in females stretch occupies residues 1–138 (MNQILLCSPI…LQQRLLTEQN (138 aa)). N-linked (GlcNAc...) asparagine glycans are attached at residues Asn88, Asn122, Asn138, and Asn145. The disordered stretch occupies residues 189-219 (LQNTRKSTKPCKKRSSKDSAPPAANQFQEAN). Residues 194-203 (KSTKPCKKRS) show a composition bias toward basic residues. The necessary and sufficient for homodimerization stretch occupies residues 219 to 264 (NVRNTYRNKYLTLLKELSQKINNEIAKVATDVPTETNPSQGNLPTL).

In terms of assembly, homodimer. May form a homodimer. In terms of processing, glycosylation. Undergoes several cleavages as it is secreted and is further processed in the recipient female. The precursor molecule is proteolytically cleaved by the seminal metalloprotease Semp1 at Lys-48 to produce CP1-N and CP1-C. Post-translationally, cleaved at Lys-67 by Semp1 to generate CP2-N and CP2-C. Cleavage appears to take place in the mated female genital tract. In terms of processing, cleaved at Lys-117 by Semp1 to generate CP3-N and CP3-C. Cleavage appears to take place in the mated female genital tract. As to expression, produced in the male accessory glands and secreted into seminal fluid (at protein level). Detected in the main cells and secondary cells of the accessory glands of 1 day old males (at protein level). In 5 day old males, confined to the secondary cells and only reappears in the main cells after mating (at protein level). Produced in adult males 3-4 hr after eclosion, levels increase reaching a peak at day 3-5 which is maintained until at least day 10 of adulthood (at protein level). In unmated male adults, levels are maintained for the first 6 days of adulthood and then gradually decrease for at least the next 8 days. In mated females, detected in the genital tract 3 minutes after the start of mating (ASM) and is secreted into the female hemolymph via the posterior vaginal wall 5 minutes ASM (at protein level).

It is found in the secreted. It localises to the cytoplasm. In terms of biological role, male seminal protein which enhances ovulation in female Drosophila by stimulating the release of oocytes by the ovary following mating. Acts by increasing octopamine (OA) neuronal signaling in the female genital tract leading to the postmating relaxation of the oviduct muscles. This activation of the OA signaling pathway is likely to indirectly contribute to the mating-dependent increase in the number of OA synaptic sites in the female reproductive tract. Male seminal peptide which is able to enhance ovulation in female Drosophila. The protein is Accessory gland-specific peptide 26Aa of Drosophila melanogaster (Fruit fly).